Reading from the N-terminus, the 138-residue chain is Dual specificity phosphatase ibp1 (138 aa).

Residues 19-133 form the Rhodanese domain; the sequence is SPNEISIIDV…WKRRYGGQQG (115 aa). Cysteine 70 (phosphocysteine intermediate) is an active-site residue.

The protein belongs to the MPI phosphatase family.

It localises to the cytoplasm. It is found in the nucleus. The catalysed reaction is O-phospho-L-tyrosyl-[protein] + H2O = L-tyrosyl-[protein] + phosphate. Functionally, may play a role in DNA replication checkpoint via regulation of hsk1 or may act downstream of hsk1 in an S phase regulatory pathway. In Schizosaccharomyces pombe (strain 972 / ATCC 24843) (Fission yeast), this protein is Dual specificity phosphatase ibp1 (ibp1).